The chain runs to 420 residues: Ribosome biogenesis protein WDR12 homolog (420 aa).

The segment at 10-92 is ubiquitin-like (UBL) domain; that stretch reads VQVHLKTKQE…EDAIEIEYVE (83 aa). WD repeat units follow at residues 104 to 142, 143 to 185, 192 to 231, 250 to 288, 290 to 329, 335 to 375, and 379 to 417; these read LHDD…LTIS, GHTA…NAVD, GHER…GVEG, GHRE…IKTE, STNK…GSVV, GHNA…APLY, and GHGD…AEDT.

It belongs to the WD repeat WDR12/YTM1 family.

The protein resides in the nucleus. It localises to the nucleolus. It is found in the nucleoplasm. Required for maturation of ribosomal RNAs and formation of the large ribosomal subunit. The chain is Ribosome biogenesis protein WDR12 homolog from Drosophila simulans (Fruit fly).